The primary structure comprises 512 residues: Kynurenine 3-monooxygenase (512 aa).

This sequence belongs to the aromatic-ring hydroxylase family. KMO subfamily. FAD serves as cofactor.

It localises to the mitochondrion outer membrane. The catalysed reaction is L-kynurenine + NADPH + O2 + H(+) = 3-hydroxy-L-kynurenine + NADP(+) + H2O. The protein operates within cofactor biosynthesis; NAD(+) biosynthesis; quinolinate from L-kynurenine: step 1/3. In terms of biological role, catalyzes the hydroxylation of L-kynurenine (L-Kyn) to form 3-hydroxy-L-kynurenine (L-3OHKyn). Required for synthesis of quinolinic acid. The chain is Kynurenine 3-monooxygenase (bna4) from Aspergillus fumigatus (strain ATCC MYA-4609 / CBS 101355 / FGSC A1100 / Af293) (Neosartorya fumigata).